Consider the following 20-residue polypeptide: FIGLLISAGKAIHDLIRRRH.

H20 bears the Histidine amide mark.

Gill.

Its subcellular location is the secreted. Functionally, has antibacterial activity against Gram-positive bacteria B.subtilis ATCC 6633, L.garvieae ATCC 49156 and S.iniae F-8502, and Gram-negative bacteria E.coli WT-2, V.anguillarum ATCC 19264, V.penaeicida KHA, V.harveyi ATCC 14126, V.vulnificus ATCC 33148, A.salmonicida NCMB 1102 and P.putida ATCC 12633. Has hemolytic activity against human red blood cells. Seems to disrupt the membranes by adopting an alpha helical conformation. May play a significant role in innate host defense. In Pagrus major (Red sea bream), this protein is Chrysophsin-3.